A 583-amino-acid polypeptide reads, in one-letter code: Protein LONG AFTER FAR-RED 3 (583 aa).

Residues 7–27 form a helical membrane-spanning segment; that stretch reads FPVMIGFVSAAVFLLISVAYL. 2 N-linked (GlcNAc...) asparagine glycosylation sites follow: N55 and N374.

This sequence belongs to the metallo-dependent hydrolases superfamily. In terms of tissue distribution, expressed at low level in seedlings, roots, leaves, stems, flowers, and siliques.

It is found in the membrane. Its subcellular location is the cytoplasm. The protein resides in the perinuclear region. In terms of biological role, required for phyA-controlled responses to continuous far-red light (FRc) conditions, including the inhibition of hypocotyl elongation and the regulation of XTH15/XTR7 expression. The protein is Protein LONG AFTER FAR-RED 3 of Arabidopsis thaliana (Mouse-ear cress).